The sequence spans 231 residues: Large ribosomal subunit protein uL1 (231 aa).

Belongs to the universal ribosomal protein uL1 family. In terms of assembly, part of the 50S ribosomal subunit.

Functionally, binds directly to 23S rRNA. The L1 stalk is quite mobile in the ribosome, and is involved in E site tRNA release. Its function is as follows. Protein L1 is also a translational repressor protein, it controls the translation of the L11 operon by binding to its mRNA. The polypeptide is Large ribosomal subunit protein uL1 (Thiobacillus denitrificans (strain ATCC 25259 / T1)).